We begin with the raw amino-acid sequence, 256 residues long: Trypsin CFT-1 (256 aa).

Residues 1–17 form the signal peptide; sequence MRVTLALVALCLASVAA. The propeptide at 18-24 is activation peptide; the sequence is LPEKQQR. Positions 25–256 constitute a Peptidase S1 domain; it reads IVGGSVTTIE…RFTAWIQANA (232 aa). A disulfide bond links cysteine 55 and cysteine 71. Residues histidine 70 and aspartate 115 each act as charge relay system in the active site. 2 disulfide bridges follow: cysteine 180–cysteine 197 and cysteine 209–cysteine 233. The active-site Charge relay system is serine 213.

Belongs to the peptidase S1 family.

The protein localises to the secreted. Its subcellular location is the extracellular space. It catalyses the reaction Preferential cleavage: Arg-|-Xaa, Lys-|-Xaa.. Functionally, responsible for the activation of delta-endotoxin from Bacillus thuringiensis. The protein is Trypsin CFT-1 of Choristoneura fumiferana (Spruce budworm moth).